Consider the following 130-residue polypeptide: Small ribosomal subunit protein uS9 (130 aa).

This sequence belongs to the universal ribosomal protein uS9 family.

The sequence is that of Small ribosomal subunit protein uS9 from Mycoplasmoides gallisepticum (strain R(low / passage 15 / clone 2)) (Mycoplasma gallisepticum).